A 182-amino-acid chain; its full sequence is Bifunctional protein PyrR (182 aa).

Positions isoleucine 99–threonine 111 match the PRPP-binding motif.

The protein belongs to the purine/pyrimidine phosphoribosyltransferase family. PyrR subfamily. Homodimer and homohexamer; in equilibrium.

It carries out the reaction UMP + diphosphate = 5-phospho-alpha-D-ribose 1-diphosphate + uracil. Functionally, regulates transcriptional attenuation of the pyrimidine nucleotide (pyr) operon by binding in a uridine-dependent manner to specific sites on pyr mRNA. This disrupts an antiterminator hairpin in the RNA and favors formation of a downstream transcription terminator, leading to a reduced expression of downstream genes. In terms of biological role, also displays a weak uracil phosphoribosyltransferase activity which is not physiologically significant. This is Bifunctional protein PyrR from Caldicellulosiruptor saccharolyticus (strain ATCC 43494 / DSM 8903 / Tp8T 6331).